The sequence spans 243 residues: MASINLFLFAFLLLLSHASASTVIFYNKCKHPVWPGIQPSAGQNLLAGGGFKLPANKAHSLQLPPLWSGRFWGRHGCTFDRSGRGHCATGDCGGSLSCNGAGGEPPATLAEITLGPELDFYDVSLVDGYNLAMSIMPVKGSGQCSYAGCVSDLNQMCPVGLQVRSRNGKRVVACKSACSAFNSPQYCCTGLFGNPQSCKPTAYSKIFKVACPKAYSYAYDDPTSIATCSKANYIVTFCPHHRH.

A signal peptide spans 1–20 (MASINLFLFAFLLLLSHASA). 8 disulfides stabilise this stretch: C29–C238, C77–C87, C92–C98, C144–C228, C149–C211, C157–C174, C178–C187, and C188–C198.

The protein belongs to the thaumatin family.

The protein is Thaumatin-like protein of Arabidopsis thaliana (Mouse-ear cress).